The sequence spans 959 residues: Probable LRR receptor-like serine/threonine-protein kinase At5g37450 (959 aa).

The signal sequence occupies residues 1–24 (MKEMMGVVGIILVVSSCCLSLLDA). At 25–565 (QEITHPTDVS…SGMSIGVSVG (541 aa)) the chain is on the extracellular side. Residues asparagine 62, asparagine 88, asparagine 102, and asparagine 123 are each glycosylated (N-linked (GlcNAc...) asparagine). LRR repeat units follow at residues 79–100 (VKEL…LGLL), 101–124 (SNLT…LGNL), 125–148 (THLI…LGSL), 149–172 (SNLL…LANL), 173–198 (KKLK…TLTN), 200–220 (LHFL…LAQM), 221–244 (PSLR…SYGS), 246–268 (PNLV…LSKS), and 269–292 (LVLY…KFSA). Asparagine 182 carries N-linked (GlcNAc...) asparagine glycosylation. Residues asparagine 293, asparagine 311, asparagine 327, asparagine 358, asparagine 369, and asparagine 510 are each glycosylated (N-linked (GlcNAc...) asparagine). LRR repeat units follow at residues 294 to 314 (ITTI…NFSG), 315 to 338 (LPRL…IWEN), and 341 to 366 (LKAE…LLNP). The chain crosses the membrane as a helical span at residues 566 to 586 (IIIGAIAFFLVLSSLALVFFI). Topologically, residues 587-959 (KRSKRKRKTR…SGVIPSIAPR (373 aa)) are cytoplasmic. The region spanning 631–906 (FSDLSQIGRG…RELENIYGLI (276 aa)) is the Protein kinase domain. ATP-binding positions include 637–645 (IGRGGYGKV) and lysine 659. Aspartate 755 acts as the Proton acceptor in catalysis.

The protein belongs to the protein kinase superfamily. Ser/Thr protein kinase family.

It is found in the membrane. It carries out the reaction L-seryl-[protein] + ATP = O-phospho-L-seryl-[protein] + ADP + H(+). The catalysed reaction is L-threonyl-[protein] + ATP = O-phospho-L-threonyl-[protein] + ADP + H(+). This chain is Probable LRR receptor-like serine/threonine-protein kinase At5g37450, found in Arabidopsis thaliana (Mouse-ear cress).